We begin with the raw amino-acid sequence, 137 residues long: NADH dehydrogenase [ubiquinone] 1 beta subcomplex subunit 7 (137 aa).

G2 carries the N-myristoyl glycine lipid modification. One can recognise a CHCH domain in the interval 56–98 (RDYCAHHLIRLLKCKRDSFPNFLACKQERHDWDYCEHRDYVMR). Residues 59–69 (CAHHLIRLLKC) carry the Cx9C motif 1 motif. Intrachain disulfides connect C59–C90 and C69–C80. The residue at position 73 (S73) is a Phosphoserine. A Cx9C motif 2 motif is present at residues 80–90 (CKQERHDWDYC). A disordered region spans residues 113 to 137 (KRREKKAAELAKGQGPGEVDPKVAL).

Belongs to the complex I NDUFB7 subunit family. In terms of assembly, complex I is composed of 45 different subunits.

Its subcellular location is the mitochondrion inner membrane. It is found in the mitochondrion intermembrane space. Accessory subunit of the mitochondrial membrane respiratory chain NADH dehydrogenase (Complex I), that is believed not to be involved in catalysis. Complex I functions in the transfer of electrons from NADH to the respiratory chain. The immediate electron acceptor for the enzyme is believed to be ubiquinone. The sequence is that of NADH dehydrogenase [ubiquinone] 1 beta subcomplex subunit 7 (NDUFB7) from Homo sapiens (Human).